Consider the following 116-residue polypeptide: Small ribosomal subunit protein bS18c (116 aa).

Residues 1–13 (MKPSFRNTSPSFR) show a composition bias toward polar residues. The interval 1–51 (MKPSFRNTSPSFRNRSKPYFRNRSKPYFRNRSKPSFRNTSKRFSPNQQSFR) is disordered. The span at 14-34 (NRSKPYFRNRSKPYFRNRSKP) shows a compositional bias: basic residues. Over residues 35–49 (SFRNTSKRFSPNQQS) the composition is skewed to polar residues.

This sequence belongs to the bacterial ribosomal protein bS18 family. As to quaternary structure, part of the 30S ribosomal subunit.

Its subcellular location is the plastid. It localises to the chloroplast. This is Small ribosomal subunit protein bS18c from Cryptomeria japonica (Japanese cedar).